A 223-amino-acid chain; its full sequence is Protein-L-isoaspartate O-methyltransferase (223 aa).

Serine 70 is an active-site residue.

It belongs to the methyltransferase superfamily. L-isoaspartyl/D-aspartyl protein methyltransferase family.

It is found in the cytoplasm. The enzyme catalyses [protein]-L-isoaspartate + S-adenosyl-L-methionine = [protein]-L-isoaspartate alpha-methyl ester + S-adenosyl-L-homocysteine. Its function is as follows. Catalyzes the methyl esterification of L-isoaspartyl residues in peptides and proteins that result from spontaneous decomposition of normal L-aspartyl and L-asparaginyl residues. It plays a role in the repair and/or degradation of damaged proteins. In Methylobacillus flagellatus (strain ATCC 51484 / DSM 6875 / VKM B-1610 / KT), this protein is Protein-L-isoaspartate O-methyltransferase.